Here is a 1009-residue protein sequence, read N- to C-terminus: Type VII secretion system accessory factor EsaA (1009 aa).

Residues 7–27 (IYALIVTLIIIIAIVSMIFFV) form a helical membrane-spanning segment. The segment covering 680–697 (TFAEEPQEPKIDKGKNDE) has biased composition (basic and acidic residues). The interval 680–707 (TFAEEPQEPKIDKGKNDEFNTMSSNLDK) is disordered. 5 helical membrane passes run 822–842 (ISPT…AYIF), 869–889 (VITS…VGLI), 903–923 (KFIL…TYLL), 928–948 (SIGM…MNNL), and 979–999 (IGLV…LNMF).

Belongs to the EsaA family. As to quaternary structure, homodimer. Interacts with EssB.

The protein localises to the cell membrane. Functionally, component of the type VII secretion system (Ess). Provides together with EssB and other components such as EssC and EssE a secretion platform across the cytoplasmic membrane in the host. This chain is Type VII secretion system accessory factor EsaA, found in Staphylococcus aureus (strain COL).